Reading from the N-terminus, the 716-residue chain is Beta-1,2-glucosyltransferase (716 aa).

Tyr-52, Ile-99, Ala-101, Glu-102, Asn-175, Glu-176, Gly-278, Trp-279, Glu-343, and Arg-349 together coordinate sophorose. The active-site Proton donor/acceptor is the Glu-176. The beta-D-glucose site is built by Glu-176, Gly-278, and Trp-279. Glu-343 functions as the Nucleophile in the catalytic mechanism. 3 residues coordinate beta-D-glucose: Arg-349, Lys-358, and Glu-361. Tyr-378 is a binding site for sophorose. The beta-D-glucose site is built by Ser-708 and Tyr-709.

The protein belongs to the glycosyl hydrolase 35 family. As to quaternary structure, homidimer.

It localises to the cytoplasm. It catalyses the reaction a D-glucoside + [(1-&gt;2)-beta-D-glucosyl](n) = a beta-D-glucosyl-(1-&gt;2)-D-glucoside + [(1-&gt;2)-beta-D-glucosyl](n-1). Functionally, glycosyltransferase acting on beta-1,2-glucooligosaccharides. Catalyzes the transfer of a glucosyl residue from the non-reducing end of a 1,2-beta-D-glucan to a glucose residue of an acceptor molecule, forming a beta-1,2-glucosidic bond. The beta-1,2-linked glucose dimer sophorose is the preferred donor in vitro. Has a very broad specificity for the acceptor and can act on various aryl- and alkyl-glucosides. Does not show any hydrolytic activity. The polypeptide is Beta-1,2-glucosyltransferase (Ignavibacterium album (strain DSM 19864 / JCM 16511 / NBRC 101810 / Mat9-16)).